A 92-amino-acid chain; its full sequence is Small ribosomal subunit protein uS17 (92 aa).

This sequence belongs to the universal ribosomal protein uS17 family. In terms of assembly, part of the 30S ribosomal subunit.

One of the primary rRNA binding proteins, it binds specifically to the 5'-end of 16S ribosomal RNA. This is Small ribosomal subunit protein uS17 from Cupriavidus metallidurans (strain ATCC 43123 / DSM 2839 / NBRC 102507 / CH34) (Ralstonia metallidurans).